Reading from the N-terminus, the 240-residue chain is Eukaryotic translation initiation factor 3 subunit K (240 aa).

The PCI domain maps to 41 to 221 (YDKDIVLTIL…TIKTRNIDEK (181 aa)).

This sequence belongs to the eIF-3 subunit K family. As to quaternary structure, component of the eukaryotic translation initiation factor 3 (eIF-3) complex.

It is found in the cytoplasm. Functionally, component of the eukaryotic translation initiation factor 3 (eIF-3) complex, which is involved in protein synthesis of a specialized repertoire of mRNAs and, together with other initiation factors, stimulates binding of mRNA and methionyl-tRNAi to the 40S ribosome. The eIF-3 complex specifically targets and initiates translation of a subset of mRNAs involved in cell proliferation. The protein is Eukaryotic translation initiation factor 3 subunit K of Caenorhabditis briggsae.